The chain runs to 204 residues: Large ribosomal subunit protein eL15A (204 aa).

The segment at 164-185 is disordered; the sequence is LTATGKKSRGINKGHKFNNTKA. The span at 169–185 shows a compositional bias: basic residues; the sequence is KKSRGINKGHKFNNTKA.

This sequence belongs to the eukaryotic ribosomal protein eL15 family. In terms of assembly, component of the large ribosomal subunit (LSU). Mature yeast ribosomes consist of a small (40S) and a large (60S) subunit. The 40S small subunit contains 1 molecule of ribosomal RNA (18S rRNA) and 33 different proteins (encoded by 57 genes). The large 60S subunit contains 3 rRNA molecules (25S, 5.8S and 5S rRNA) and 46 different proteins (encoded by 81 genes).

Its subcellular location is the cytoplasm. Component of the ribosome, a large ribonucleoprotein complex responsible for the synthesis of proteins in the cell. The small ribosomal subunit (SSU) binds messenger RNAs (mRNAs) and translates the encoded message by selecting cognate aminoacyl-transfer RNA (tRNA) molecules. The large subunit (LSU) contains the ribosomal catalytic site termed the peptidyl transferase center (PTC), which catalyzes the formation of peptide bonds, thereby polymerizing the amino acids delivered by tRNAs into a polypeptide chain. The nascent polypeptides leave the ribosome through a tunnel in the LSU and interact with protein factors that function in enzymatic processing, targeting, and the membrane insertion of nascent chains at the exit of the ribosomal tunnel. This chain is Large ribosomal subunit protein eL15A, found in Saccharomyces cerevisiae (strain ATCC 204508 / S288c) (Baker's yeast).